Here is a 398-residue protein sequence, read N- to C-terminus: UDP-N-acetylglucosamine--N-acetylmuramyl-(pentapeptide) pyrophosphoryl-undecaprenol N-acetylglucosamine transferase (398 aa).

Residues 15 to 17 (TGG), Asn125, Arg168, Ser196, and Gln297 each bind UDP-N-acetyl-alpha-D-glucosamine.

This sequence belongs to the glycosyltransferase 28 family. MurG subfamily.

Its subcellular location is the cell inner membrane. It carries out the reaction di-trans,octa-cis-undecaprenyl diphospho-N-acetyl-alpha-D-muramoyl-L-alanyl-D-glutamyl-meso-2,6-diaminopimeloyl-D-alanyl-D-alanine + UDP-N-acetyl-alpha-D-glucosamine = di-trans,octa-cis-undecaprenyl diphospho-[N-acetyl-alpha-D-glucosaminyl-(1-&gt;4)]-N-acetyl-alpha-D-muramoyl-L-alanyl-D-glutamyl-meso-2,6-diaminopimeloyl-D-alanyl-D-alanine + UDP + H(+). It participates in cell wall biogenesis; peptidoglycan biosynthesis. Cell wall formation. Catalyzes the transfer of a GlcNAc subunit on undecaprenyl-pyrophosphoryl-MurNAc-pentapeptide (lipid intermediate I) to form undecaprenyl-pyrophosphoryl-MurNAc-(pentapeptide)GlcNAc (lipid intermediate II). In Erythrobacter litoralis (strain HTCC2594), this protein is UDP-N-acetylglucosamine--N-acetylmuramyl-(pentapeptide) pyrophosphoryl-undecaprenol N-acetylglucosamine transferase.